The primary structure comprises 210 residues: DNA dC-&gt;dU-editing enzyme APOBEC-3H (210 aa).

Residues 4–126 (LTAKTFSLQF…PNYQEGLLLL (123 aa)) enclose the CMP/dCMP-type deaminase domain. His54 contributes to the Zn(2+) binding site. Glu56 functions as the Proton donor in the catalytic mechanism. Zn(2+)-binding residues include Cys85 and Cys88. Residues 182–210 (SRSVDVLENGLRSLQLGPVTPSSSIRNSR) are necessary and sufficient for localization to the cytoplasm.

The protein belongs to the cytidine and deoxycytidylate deaminase family. In terms of assembly, homodimer. Requires Zn(2+) as cofactor.

It is found in the cytoplasm. It catalyses the reaction a 2'-deoxycytidine in single-stranded DNA + H2O + H(+) = a 2'-deoxyuridine in single-stranded DNA + NH4(+). Its activity is regulated as follows. Antiviral activity is neutralized by the simian immunodeficiency virus rhesus (SIV-mac) virion infectivity factor (VIF). Functionally, DNA deaminase (cytidine deaminase) which acts as an inhibitor of retrovirus replication and retrotransposon mobility via deaminase-dependent and -independent mechanisms. Exhibits antiviral activity against vif-deficient HIV-1. After the penetration of retroviral nucleocapsids into target cells of infection and the initiation of reverse transcription, it can induce the conversion of cytosine to uracil in the minus-sense single-strand viral DNA, leading to G-to-A hypermutations in the subsequent plus-strand viral DNA. The resultant detrimental levels of mutations in the proviral genome, along with a deamination-independent mechanism that works prior to the proviral integration, together exert efficient antiretroviral effects in infected target cells. Selectively targets single-stranded DNA and does not deaminate double-stranded DNA or single- or double-stranded RNA. In Macaca mulatta (Rhesus macaque), this protein is DNA dC-&gt;dU-editing enzyme APOBEC-3H.